Reading from the N-terminus, the 214-residue chain is Imidazole glycerol phosphate synthase subunit HisH 2 (214 aa).

Residues 2 to 210 (KIVIIDYDMG…LDWVKIQKLG (209 aa)) enclose the Glutamine amidotransferase type-1 domain. Cysteine 82 serves as the catalytic Nucleophile. Catalysis depends on residues histidine 185 and glutamate 187.

Heterodimer of HisH and HisF.

The protein localises to the cytoplasm. The enzyme catalyses 5-[(5-phospho-1-deoxy-D-ribulos-1-ylimino)methylamino]-1-(5-phospho-beta-D-ribosyl)imidazole-4-carboxamide + L-glutamine = D-erythro-1-(imidazol-4-yl)glycerol 3-phosphate + 5-amino-1-(5-phospho-beta-D-ribosyl)imidazole-4-carboxamide + L-glutamate + H(+). It catalyses the reaction L-glutamine + H2O = L-glutamate + NH4(+). Its pathway is amino-acid biosynthesis; L-histidine biosynthesis; L-histidine from 5-phospho-alpha-D-ribose 1-diphosphate: step 5/9. Its function is as follows. IGPS catalyzes the conversion of PRFAR and glutamine to IGP, AICAR and glutamate. The HisH subunit provides the glutamine amidotransferase activity that produces the ammonia necessary to HisF for the synthesis of IGP and AICAR. In Vibrio vulnificus (strain YJ016), this protein is Imidazole glycerol phosphate synthase subunit HisH 2 (hisH2).